A 1426-amino-acid polypeptide reads, in one-letter code: Nephrocystin-4 (1426 aa).

Ser142 bears the Phosphoserine mark. Disordered regions lie at residues 450–536 (GSEE…SPAQ) and 896–935 (RQGKGPQDVSRESDATRRRKLERMRSVRLQEAGGDLGRRG). The segment covering 474–486 (KPPTSPSSPPAPV) has biased composition (pro residues). Over residues 503–536 (SISQLAASPRSPTQHCLARPTSQLPHGSQASPAQ) the composition is skewed to polar residues. Residues 823 to 1426 (LTLANVGHPC…EAFCVKVIYQ (604 aa)) form a sufficient for basal bodies localization region.

It belongs to the NPHP4 family. As to quaternary structure, interacts with NPHP1. Interacts with NPHP1 and RPGRIP1L/NPHP8; NPHP1, NPHP4 and RPGRIP1L are proposed to form a functional NPHP1-4-8 module localized to cell-cell contacts and the ciliary transition zone; NPHP4 mediates the interaction between NPHP1 and RPGRIP1L. Interacts with IQCB1/NPHP5; the interaction likely requires additional interactors. Interacts with RPGRIP1, CEP164, JADE1, PALS1, INADL, PARD6A, INVS, DVL2, LATS1. Interacts with INTU; INTU mediates the interaction between NPHP4 and DAAM1. Interacts with SPATA7. As to expression, expressed in kidney, skeletal muscle, heart and liver, and to a lesser extent in brain and lung.

Its subcellular location is the cytoplasm. It localises to the cytoskeleton. It is found in the cilium basal body. The protein resides in the microtubule organizing center. The protein localises to the centrosome. Its subcellular location is the cell junction. It localises to the tight junction. It is found in the nucleus. Its function is as follows. Involved in the organization of apical junctions; the function is proposed to implicate a NPHP1-4-8 module. Does not seem to be strictly required for ciliogenesis. Required for building functional cilia. Involved in the organization of the subapical actin network in multiciliated epithelial cells. Seems to recruit INT to basal bodies of motile cilia which subsequently interacts with actin-modifying proteins such as DAAM1. In cooperation with INVS may down-regulate the canonical Wnt pathway and promote the Wnt-PCP pathway by regulating expression and subcellular location of disheveled proteins. Stabilizes protein levels of JADE1 and promotes its translocation to the nucleus leading to cooperative inhibition of canonical Wnt signaling. Acts as a negative regulator of the hippo pathway by association with LATS1 and modifying LATS1-dependent phosphorylation and localization of WWTR1/TAZ. The sequence is that of Nephrocystin-4 (NPHP4) from Homo sapiens (Human).